A 601-amino-acid polypeptide reads, in one-letter code: ATP-dependent lipid A-core flippase (601 aa).

4 helical membrane passes run 26–46 (VGLF…QPML), 82–102 (LMIV…NYFL), 167–187 (VFLF…MVAI), and 263–283 (VYTP…LFLV). An ABC transmembrane type-1 domain is found at 30–321 (AVSILGYVIF…LSEVSSTIQR (292 aa)). The ABC transporter domain occupies 353 to 589 (IEVRDLSFRY…GGHYARLHAM (237 aa)). 387–394 (GRSGSGKS) provides a ligand contact to ATP.

This sequence belongs to the ABC transporter superfamily. Lipid exporter (TC 3.A.1.106) family. In terms of assembly, homodimer.

Its subcellular location is the cell inner membrane. The catalysed reaction is ATP + H2O + lipid A-core oligosaccharideSide 1 = ADP + phosphate + lipid A-core oligosaccharideSide 2.. In terms of biological role, involved in lipopolysaccharide (LPS) biosynthesis. Translocates lipid A-core from the inner to the outer leaflet of the inner membrane. Transmembrane domains (TMD) form a pore in the inner membrane and the ATP-binding domain (NBD) is responsible for energy generation. The protein is ATP-dependent lipid A-core flippase of Aromatoleum aromaticum (strain DSM 19018 / LMG 30748 / EbN1) (Azoarcus sp. (strain EbN1)).